The sequence spans 90 residues: Small ribosomal subunit protein bS16 (90 aa).

This sequence belongs to the bacterial ribosomal protein bS16 family.

The sequence is that of Small ribosomal subunit protein bS16 from Listeria innocua serovar 6a (strain ATCC BAA-680 / CLIP 11262).